The chain runs to 262 residues: Glutamate racemase (262 aa).

Residues 10–11 (DS) and 42–43 (FG) each bind substrate. The active-site Proton donor/acceptor is Cys74. A substrate-binding site is contributed by 75–76 (NT). The active-site Proton donor/acceptor is the Cys189. 190 to 191 (TH) provides a ligand contact to substrate.

Belongs to the aspartate/glutamate racemases family.

It carries out the reaction L-glutamate = D-glutamate. It participates in cell wall biogenesis; peptidoglycan biosynthesis. Functionally, provides the (R)-glutamate required for cell wall biosynthesis. The polypeptide is Glutamate racemase (Mesorhizobium japonicum (strain LMG 29417 / CECT 9101 / MAFF 303099) (Mesorhizobium loti (strain MAFF 303099))).